We begin with the raw amino-acid sequence, 478 residues long: Calcium/calmodulin-dependent protein kinase type II subunit alpha (478 aa).

A Phosphotyrosine modification is found at Tyr13. The region spanning 13–271 (YQLFEELGKG…AAEALKHPWI (259 aa)) is the Protein kinase domain. ATP-binding positions include 19–27 (LGKGAFSVV) and Lys42. Asp135 (proton acceptor) is an active-site residue. Phosphoserine is present on Ser257. A Phosphothreonine; by autocatalysis modification is found at Thr286. A calmodulin-binding region spans residues 290 to 300 (LKKFNARRKLK). The interaction with BAALC stretch occupies residues 310–320 (TRNFSGGKSGG). Residues 314-341 (SGGKSGGNKKNDGVKESSESTNTTIEDE) form a disordered region. The span at 322–331 (KKNDGVKESS) shows a compositional bias: basic and acidic residues. Ser330, Ser331, and Ser333 each carry phosphoserine. Residues Thr336 and Thr337 each carry the phosphothreonine modification. Phosphoserine is present on Ser404.

It belongs to the protein kinase superfamily. CAMK Ser/Thr protein kinase family. CaMK subfamily. There are 4 genes encoding calcium/calmodulin-dependent protein kinase type II chains: CAMK2A, CAMK2B, CAMK2G and CAMK2D. The corresponding proteins assemble into homo- or heteromultimeric holoenzymes composed of 12 subunits with two hexameric rings stacked one on top of the other. Interacts with BAALC. Interacts with MPDZ. Interacts with SYN1. Interacts with CAMK2N2. Interacts with SYNGAP1. Interacts with SYNPO2. Interacts with SHANK3. Interacts with GRIN2B. Interacts with CACNB2. Interacts with LRRC7. Interacts with GRM5. Interacts with DAGLA (via C-terminal); this interaction is enhanced by autophosphorylation of CAMK2A at Thr-286. Interacts with CAMK2N1; this interaction requires CAMK2A activation by Ca(2+). It depends on Mg(2+) as a cofactor. In terms of processing, autophosphorylation of Thr-286 following activation by Ca(2+)/calmodulin. Phosphorylation of Thr-286 locks the kinase into an activated state. Palmitoylated. Probably palmitoylated by ZDHHC3 and ZDHHC7. Expressed in brain. In terms of tissue distribution, expressed in skeletal muscle.

It localises to the cytoplasm. Its subcellular location is the synapse. It is found in the postsynaptic density. The protein resides in the cell projection. The protein localises to the dendritic spine. It localises to the dendrite. The enzyme catalyses L-seryl-[protein] + ATP = O-phospho-L-seryl-[protein] + ADP + H(+). The catalysed reaction is L-threonyl-[protein] + ATP = O-phospho-L-threonyl-[protein] + ADP + H(+). Activated by Ca(2+)/calmodulin. Binding of calmodulin results in conformational change that relieves intrasteric autoinhibition and allows autophosphorylation of Thr-286 which turns the kinase in a constitutively active form and confers to the kinase a Ca(2+)-independent activity. Calcium/calmodulin-dependent protein kinase that functions autonomously after Ca(2+)/calmodulin-binding and autophosphorylation, and is involved in various processes, such as synaptic plasticity, neurotransmitter release and long-term potentiation. Member of the NMDAR signaling complex in excitatory synapses, it regulates NMDAR-dependent potentiation of the AMPAR and therefore excitatory synaptic transmission. Regulates dendritic spine development. Also regulates the migration of developing neurons. Phosphorylates the transcription factor FOXO3 to activate its transcriptional activity. Phosphorylates the transcription factor ETS1 in response to calcium signaling, thereby decreasing ETS1 affinity for DNA. In response to interferon-gamma (IFN-gamma) stimulation, catalyzes phosphorylation of STAT1, stimulating the JAK-STAT signaling pathway. In response to interferon-beta (IFN-beta) stimulation, stimulates the JAK-STAT signaling pathway. Acts as a negative regulator of 2-arachidonoylglycerol (2-AG)-mediated synaptic signaling via modulation of DAGLA activity. Functionally, has no kinase activity. The protein is Calcium/calmodulin-dependent protein kinase type II subunit alpha (Camk2a) of Mus musculus (Mouse).